Consider the following 550-residue polypeptide: MTSRKILVTSALPYANGEIHLGHLLEYIQADIWVRFQKMMGNECYYVCADDTHGTPIMLKSDELGITPETLIKGVSERHQADFKEFSIGFSKYHSTHSQENKDISANIYHKLNDAGFIKTRIISQAFDPEKQMFLPDRFIKGDCPKCGANDQYGDNCEICGVTYSPTELKNAKSIISDATPIAKDSEHYFFDLPQFETQLKAWIKEGHLQDEVSNKLSEWFEQGLQQWDISRDAPYFGFQIPDVEGKYFYVWLDAPIGYMASFKKLCDEQGLDFDEYFNKDSNTELYHFIGKDIVYFHALFWPAILMGSNYRTPSAIFVHGFLTVNGQKMSKSRGTFIQARTYLNHLNPECLRYYYAYKLSAKIDDIDLNLTDFKQRVNSDLVGKVVNIASRSTGFLVKKFNKTLSDYAIDPELYHEFVACGDIIKKHYEARNYNQAMREIMKLADKANQYIDEHKPWQLVKKDTKQVHDVTSLAINLFRVLMTYLKPVLPVMAKQAEMFLNIDAFNWQDLKRPLTKHQINTFKPLMSRIEDEKIEQVIEASKQNMQVVA.

A 'HIGH' region motif is present at residues 13-23 (PYANGEIHLGH). Residues C144, C147, C157, and C160 each coordinate Zn(2+). The 'KMSKS' region motif lies at 329 to 333 (KMSKS). K332 is a binding site for ATP.

Belongs to the class-I aminoacyl-tRNA synthetase family. MetG type 1 subfamily. As to quaternary structure, monomer. Zn(2+) is required as a cofactor.

The protein localises to the cytoplasm. The enzyme catalyses tRNA(Met) + L-methionine + ATP = L-methionyl-tRNA(Met) + AMP + diphosphate. Functionally, is required not only for elongation of protein synthesis but also for the initiation of all mRNA translation through initiator tRNA(fMet) aminoacylation. In Ruthia magnifica subsp. Calyptogena magnifica, this protein is Methionine--tRNA ligase.